The chain runs to 348 residues: Phosphate acyltransferase (348 aa).

Belongs to the PlsX family. As to quaternary structure, homodimer. Probably interacts with PlsY.

The protein localises to the cytoplasm. It catalyses the reaction a fatty acyl-[ACP] + phosphate = an acyl phosphate + holo-[ACP]. The protein operates within lipid metabolism; phospholipid metabolism. Functionally, catalyzes the reversible formation of acyl-phosphate (acyl-PO(4)) from acyl-[acyl-carrier-protein] (acyl-ACP). This enzyme utilizes acyl-ACP as fatty acyl donor, but not acyl-CoA. The polypeptide is Phosphate acyltransferase (Oenococcus oeni (strain ATCC BAA-331 / PSU-1)).